Reading from the N-terminus, the 206-residue chain is MQRFLVFTIVAVATAAAGDIFYPGYCPDVKPVDDFDLSAFAGAWHEIAKLPLENENQGKCTIAEYKYDGKKASVYNSFVVNGVKEYMEGDLEIAPDAKYTKQGKYVMTFKFGQRVVNLVPWVLATDYKNYAINYNCNYHPDKKAHSIHAWILSKSKVLEGNTKEVVDNVLKTFSHLIDASKFISNDFSEAACQYSTTYSLTGPDRH.

The N-terminal stretch at methionine 1–alanine 17 is a signal peptide. 2 disulfides stabilise this stretch: cysteine 26–cysteine 136 and cysteine 60–cysteine 192.

The protein belongs to the calycin superfamily. Lipocalin family. As to quaternary structure, homotetramer. Synthesized only in the caterpillars, apparently by the epidermis and secreted into the hemolymph. The protein is passed over from the larval hemolymph to that of pupae and adults and is sequestered in the eggs.

It localises to the secreted. This protein binds a chromophore: biliverdin IX, isomer gamma. Mixed with lipoprotein-bound carotenes, this blue protein provides hornworms with their green cryptic coloration which serves a camouflage. The sequence is that of Insecticyanin-B (INSB) from Manduca sexta (Tobacco hawkmoth).